A 182-amino-acid polypeptide reads, in one-letter code: CDP-diacylglycerol--glycerol-3-phosphate 3-phosphatidyltransferase (182 aa).

Topologically, residues 1–12 are cytoplasmic; it reads MQLNIPTWLTLF. Residues 13–37 traverse the membrane as a helical segment; that stretch reads RVVMIPFFVLAFYLPFKWAPLCCAL. Residues 38-60 are Periplasmic-facing; the sequence is IFVLAAVTDWFDGFLARRWKQTT. The chain crosses the membrane as a helical span at residues 61–81; that stretch reads RFGAFLDPVADKVMVAMALVL. The Cytoplasmic portion of the chain corresponds to 82-86; sequence VAEHF. A helical transmembrane segment spans residues 87–107; it reads HSWWITLPAATMIAREIIISA. The Periplasmic portion of the chain corresponds to 108–145; the sequence is LREWMAEIGKRSSVAVSWIGKVKTTAQMLALVTLLWRP. A helical transmembrane segment spans residues 146-168; it reads DDIVSGIGIAALYVAAVLTFWSM. At 169 to 181 the chain is on the cytoplasmic side; sequence FQYLYAARHDLFE.

This sequence belongs to the CDP-alcohol phosphatidyltransferase class-I family.

It is found in the cell inner membrane. The enzyme catalyses a CDP-1,2-diacyl-sn-glycerol + sn-glycerol 3-phosphate = a 1,2-diacyl-sn-glycero-3-phospho-(1'-sn-glycero-3'-phosphate) + CMP + H(+). It participates in phospholipid metabolism; phosphatidylglycerol biosynthesis; phosphatidylglycerol from CDP-diacylglycerol: step 1/2. Functionally, catalyzes the conversion of cytidine diphosphate diacylglycerol (CDP-DG) and glycerol 3-phosphate into phosphatidylglycerol. Essential for the synthesis of anionic phospholipids, thereby playing a role in balancing the ratio of zwitterionic and anionic phospholipids, which is thought to be important for normal membrane function. The chain is CDP-diacylglycerol--glycerol-3-phosphate 3-phosphatidyltransferase from Sodalis glossinidius (strain morsitans).